A 1102-amino-acid chain; its full sequence is WASH complex subunit 4 (1102 aa).

It belongs to the SWIP family. In terms of assembly, component of the WASH complex.

It is found in the early endosome. Acts at least in part as component of the WASH complex which may regulate wash nucleation-promoting factor (NPF) activity and is required for its membrane targeting during endosomal sorting. During embryogenesis, not involved in the wash-dependent developmental migration of hemocytes anteriorly from the tail. In Drosophila melanogaster (Fruit fly), this protein is WASH complex subunit 4.